Reading from the N-terminus, the 256-residue chain is Osteocalcin 2 (256 aa).

Positions 1-18 (MKTLVLLSICALLSVCWS) are cleaved as a signal peptide. Positions 19 to 209 (MGAVEPEVVV…LASVLLRRRR (191 aa)) are excised as a propeptide. Positions 38–186 (AAPADPAAAA…SSSSSSSSES (149 aa)) are enriched in low complexity. Residues 38 to 193 (AAPADPAAAA…SESASDEAAK (156 aa)) are disordered. The Gla domain occupies 218 to 252 (PLQLESLREVCELNIACDEMAETAGIVAAYVAYYG). Positions 222, 226, 229, and 235 each coordinate Ca(2+). 3 positions are modified to 4-carboxyglutamate: Glu222, Glu226, and Glu229. Residues Cys228 and Cys234 are joined by a disulfide bond. Glu236 is subject to 4-carboxyglutamate.

This sequence belongs to the osteocalcin/matrix Gla protein family. Post-translationally, gamma-carboxyglutamate residues are formed by vitamin K dependent carboxylation by GGCX. These residues are essential for the binding of calcium.

The protein resides in the secreted. In terms of biological role, the carboxylated form is one of the main organic components of the bone matrix, which constitutes 1-2% of the total bone protein. The carboxylated form binds strongly to apatite and calcium. This Diplodus sargus (White seabream) protein is Osteocalcin 2.